We begin with the raw amino-acid sequence, 230 residues long: CRP-like protein Clp (230 aa).

Position 18-139 (18-139 (PSLALDAGTI…APKILYAIGV (122 aa))) interacts with a nucleoside 3',5'-cyclic phosphate. Positions 158 to 230 (LDVTDRIVRT…GKTVVLYGTR (73 aa)) constitute an HTH crp-type domain. Positions 190-209 (RQELARLVGCSREMAGRVLK) form a DNA-binding region, H-T-H motif.

Homodimer.

Its subcellular location is the cytoplasm. Its activity is regulated as follows. Allosterically inhibited by cyclic di-GMP (c-di-GMP), which binds to Clp and abolishes its ability to bind its target gene promoter. Global transcriptional regulator that regulates virulence factors production by activating or repressing the expression of a large set of genes in diffusible signal factor (DSF) pathway. The chain is CRP-like protein Clp (clp) from Xanthomonas axonopodis pv. citri (strain 306).